The following is a 396-amino-acid chain: 1-deoxy-D-xylulose 5-phosphate reductoisomerase (396 aa).

NADPH-binding residues include Thr-13, Gly-14, Ser-15, Ile-16, and Asn-127. A 1-deoxy-D-xylulose 5-phosphate-binding site is contributed by Lys-128. Glu-129 contributes to the NADPH binding site. Asp-153 lines the Mn(2+) pocket. Residues Ser-154, Glu-155, Ser-184, and His-207 each coordinate 1-deoxy-D-xylulose 5-phosphate. A Mn(2+)-binding site is contributed by Glu-155. Residue Gly-213 coordinates NADPH. Positions 220, 225, 226, and 229 each coordinate 1-deoxy-D-xylulose 5-phosphate. Glu-229 lines the Mn(2+) pocket.

The protein belongs to the DXR family. It depends on Mg(2+) as a cofactor. Requires Mn(2+) as cofactor.

The enzyme catalyses 2-C-methyl-D-erythritol 4-phosphate + NADP(+) = 1-deoxy-D-xylulose 5-phosphate + NADPH + H(+). The protein operates within isoprenoid biosynthesis; isopentenyl diphosphate biosynthesis via DXP pathway; isopentenyl diphosphate from 1-deoxy-D-xylulose 5-phosphate: step 1/6. In terms of biological role, catalyzes the NADPH-dependent rearrangement and reduction of 1-deoxy-D-xylulose-5-phosphate (DXP) to 2-C-methyl-D-erythritol 4-phosphate (MEP). This Pseudomonas fluorescens (strain ATCC BAA-477 / NRRL B-23932 / Pf-5) protein is 1-deoxy-D-xylulose 5-phosphate reductoisomerase.